Reading from the N-terminus, the 660-residue chain is DNA mismatch repair protein MutL (660 aa).

The interval 414 to 433 is disordered; that stretch reads SSVKHASRPQNTFTETDHPN.

It belongs to the DNA mismatch repair MutL/HexB family.

In terms of biological role, this protein is involved in the repair of mismatches in DNA. It is required for dam-dependent methyl-directed DNA mismatch repair. May act as a 'molecular matchmaker', a protein that promotes the formation of a stable complex between two or more DNA-binding proteins in an ATP-dependent manner without itself being part of a final effector complex. In Streptococcus pyogenes serotype M6 (strain ATCC BAA-946 / MGAS10394), this protein is DNA mismatch repair protein MutL.